We begin with the raw amino-acid sequence, 243 residues long: 2-C-methyl-D-erythritol 4-phosphate cytidylyltransferase (243 aa).

Belongs to the IspD/TarI cytidylyltransferase family. IspD subfamily.

The catalysed reaction is 2-C-methyl-D-erythritol 4-phosphate + CTP + H(+) = 4-CDP-2-C-methyl-D-erythritol + diphosphate. It functions in the pathway isoprenoid biosynthesis; isopentenyl diphosphate biosynthesis via DXP pathway; isopentenyl diphosphate from 1-deoxy-D-xylulose 5-phosphate: step 2/6. Its function is as follows. Catalyzes the formation of 4-diphosphocytidyl-2-C-methyl-D-erythritol from CTP and 2-C-methyl-D-erythritol 4-phosphate (MEP). The sequence is that of 2-C-methyl-D-erythritol 4-phosphate cytidylyltransferase from Colwellia psychrerythraea (strain 34H / ATCC BAA-681) (Vibrio psychroerythus).